A 129-amino-acid chain; its full sequence is Glycophorin-A (129 aa).

The first 17 residues, 1 to 17, serve as a signal peptide directing secretion; sequence MYEKIVIVLLLSGYIST. At Gln-18 the chain carries Pyrrolidone carboxylic acid. Residues 18–82 lie on the Extracellular side of the membrane; sequence QDVTEIIPHE…QLVHIFSEPV (65 aa). 2 O-linked (GalNAc...) serine glycosylation sites follow: Ser-29 and Ser-30. Residue Thr-34 is glycosylated (O-linked (GalNAc...) threonine). Residue Ser-40 is glycosylated (O-linked (GalNAc...) serine). O-linked (GalNAc...) threonine glycans are attached at residues Thr-41 and Thr-48. Ser-56 carries O-linked (GalNAc...) serine glycosylation. The chain crosses the membrane as a helical span at residues 83–103; it reads IIGIIYAVMLGIIITILSIAF. Over 104–129 the chain is Cytoplasmic; the sequence is CIGQLTKKSSLPAQVASPEDVDPEVL.

This sequence belongs to the glycophorin-A family. In terms of assembly, homodimer. Component of the ankyrin-1 complex in the erythrocyte, composed of ANK1, RHCE, RHAG, SLC4A1, EPB42, GYPA, GYPB and AQP1. Interacts with SLC4A1; a GYPA monomer is bound at each end of the SLC4A1 dimer forming a heterotetramer.

The protein resides in the membrane. In terms of biological role, component of the ankyrin-1 complex, a multiprotein complex involved in the stability and shape of the erythrocyte membrane. Glycophorin A is the major intrinsic membrane protein of the erythrocyte. The N-terminal glycosylated segment, which lies outside the erythrocyte membrane, has MN blood group receptors. Appears to be important for the function of SLC4A1 and is required for high activity of SLC4A1. May be involved in translocation of SLC4A1 to the plasma membrane. In Canis lupus familiaris (Dog), this protein is Glycophorin-A.